Consider the following 459-residue polypeptide: Adenylosuccinate synthetase isozyme 1 C (459 aa).

Residues 1-31 are disordered; that stretch reads MSFSWSAKDHKSYTNPPSNPTQGLKRPRNDT. Positions 13–22 are enriched in polar residues; that stretch reads YTNPPSNPTQ. GTP-binding positions include 44 to 50 and 72 to 74; these read GDEGKGK and GHT. Residue aspartate 45 is the Proton acceptor of the active site. The Mg(2+) site is built by aspartate 45 and glycine 72. A substrate-binding site is contributed by aspartate 45. IMP-binding positions include 45–48, 70–73, threonine 165, arginine 179, asparagine 258, threonine 273, and arginine 337; these read DEGK and NAGH. The active-site Proton donor is the histidine 73. 333–339 serves as a coordination point for substrate; sequence VTTGRKR. Residues arginine 339, 365–367, and 447–450 each bind GTP; these read KLD and GVGK.

This sequence belongs to the adenylosuccinate synthetase family. In terms of assembly, homodimer. The cofactor is Mg(2+).

Its subcellular location is the cytoplasm. It catalyses the reaction IMP + L-aspartate + GTP = N(6)-(1,2-dicarboxyethyl)-AMP + GDP + phosphate + 2 H(+). The protein operates within purine metabolism; AMP biosynthesis via de novo pathway; AMP from IMP: step 1/2. In terms of biological role, component of the purine nucleotide cycle (PNC), which interconverts IMP and AMP to regulate the nucleotide levels in various tissues, and which contributes to glycolysis and ammoniagenesis. Catalyzes the first committed step in the biosynthesis of AMP from IMP. The protein is Adenylosuccinate synthetase isozyme 1 C (adss1c) of Salmo salar (Atlantic salmon).